The primary structure comprises 402 residues: Elongation factor Tu (402 aa).

In terms of domain architecture, tr-type G spans 10–212 (KPHVNIGTIG…AVDEYIPTPE (203 aa)). The G1 stretch occupies residues 19–26 (GHVDHGKT). Position 19–26 (19–26 (GHVDHGKT)) interacts with GTP. Position 26 (Thr-26) interacts with Mg(2+). A G2 region spans residues 60–64 (GITIA). Positions 81-84 (DCPG) are G3. GTP-binding positions include 81 to 85 (DCPGH) and 136 to 139 (NKED). The G4 stretch occupies residues 136-139 (NKED). Residues 177 to 179 (SAF) are G5.

It belongs to the TRAFAC class translation factor GTPase superfamily. Classic translation factor GTPase family. EF-Tu/EF-1A subfamily. In terms of assembly, monomer.

The protein localises to the cytoplasm. The catalysed reaction is GTP + H2O = GDP + phosphate + H(+). In terms of biological role, GTP hydrolase that promotes the GTP-dependent binding of aminoacyl-tRNA to the A-site of ribosomes during protein biosynthesis. In Aliarcobacter butzleri (strain RM4018) (Arcobacter butzleri), this protein is Elongation factor Tu.